The sequence spans 308 residues: F-actin-capping protein subunit alpha (308 aa).

The protein belongs to the F-actin-capping protein alpha subunit family. In terms of assembly, component of the F-actin capping complex, composed of a heterodimer of an alpha and a beta subunit.

Functionally, F-actin-capping proteins bind in a Ca(2+)-independent manner to the fast growing ends of actin filaments (barbed end) thereby blocking the exchange of subunits at these ends. Unlike other capping proteins (such as gelsolin and severin), these proteins do not sever actin filaments. The chain is F-actin-capping protein subunit alpha from Arabidopsis thaliana (Mouse-ear cress).